We begin with the raw amino-acid sequence, 300 residues long: FNPCPYSDDTVKMIILTRENKKHDFYTLDTIKKHNEFKKSTIKHQVVFITHGFTSSADTENFLAMAKALSDKGNYLVILIDWRVAACTEEMSGIQLAYYSYAASNTRLVGNYIATVTKMLVQKYNVPMANIRLIGHSLGAHTSGFAGKKVQELGLGKYSEIIGLDPAGPSFKSNDCSERICKTDAHYVQIIHTSNHLGTLVTLGTVDFMNNGYNQPGCGLPLIGETCSHTRAVKYFTECIKHECCLIGVPQSKKPQPVSKCTRNECVCVGLNAKTYPKTGSFYVPVESKAPYCNNKGKII.

A disulfide bond links C4 and C87. S137 (nucleophile) is an active-site residue. D165 (charge relay system) is an active-site residue. 2 disulfide bridges follow: C176–C181 and C218–C227. H229 (charge relay system) is an active-site residue. Cystine bridges form between C244-C268, C245-C293, and C261-C266.

Belongs to the AB hydrolase superfamily. Lipase family. As to expression, expressed by the venom gland.

It is found in the secreted. The enzyme catalyses a 1,2-diacyl-sn-glycero-3-phosphocholine + H2O = a 2-acyl-sn-glycero-3-phosphocholine + a fatty acid + H(+). With respect to regulation, local inflammatory effects are inhibited by antiserotonin drugs (cyproheptadine and methysergide), indomethacin, betamethasone, and antihistamine (chlorpheniramine). Functionally, catalyzes the hydrolysis of phosphatidylcholine with phospholipase A1 activity. Shows potent hemolytic activity that is responsible for its lethal effect. May act as an allergen. In vivo, induces local inflammatory effects. The polypeptide is Phospholipase A1 (Vespa basalis (Hornet)).